A 278-amino-acid chain; its full sequence is Elongation factor Ts (278 aa).

Residues 80-83 (TDFV) are involved in Mg(2+) ion dislocation from EF-Tu.

The protein belongs to the EF-Ts family.

The protein resides in the cytoplasm. Associates with the EF-Tu.GDP complex and induces the exchange of GDP to GTP. It remains bound to the aminoacyl-tRNA.EF-Tu.GTP complex up to the GTP hydrolysis stage on the ribosome. The polypeptide is Elongation factor Ts (Paenarthrobacter aurescens (strain TC1)).